We begin with the raw amino-acid sequence, 150 residues long: AN1-type zinc finger protein TMC1 (150 aa).

The interval 1 to 82 (MSDINEIEIP…TKKTTKKKKK (82 aa)) is disordered. Position 2 is an N-acetylserine (Ser-2). Residues 23 to 33 (DPMHEIEDKST) are compositionally biased toward basic and acidic residues. Ser-43 and Ser-54 each carry phosphoserine. Positions 53-70 (NSRSSSNSSVTSTGQSSR) are enriched in low complexity. A compositionally biased stretch (basic residues) spans 71–82 (RVTKKTTKKKKK). The AN1-type zinc-finger motif lies at 79-128 (KKKKNACYFDTCSSAASKFIGDCNFCKGHFCSKHRLMENHACNGLTSCKE). Residues Cys-85, Cys-90, Cys-101, Cys-104, Cys-109, His-112, His-118, and Cys-120 each coordinate Zn(2+).

It is found in the nucleus. May have a role in protecting cells from metalloid-induced proteotoxicity. The chain is AN1-type zinc finger protein TMC1 from Saccharomyces cerevisiae (strain ATCC 204508 / S288c) (Baker's yeast).